Consider the following 249-residue polypeptide: Protein TIFY 10B (249 aa).

The Tify domain maps to 113–148 (PESQSAPLTIFYGGRVMVFDDFSAEKAKEVIDLANK). The short motif at 204 to 229 (PIARRASLHRFLEKRKDRITSKAPYQ) is the Jas element. A Nuclear localization signal motif is present at residues 206 to 213 (ARRASLHR). Residues 225–249 (KAPYQIDGSAEASSKPTNPAWLSSR) form a disordered region. Positions 235 to 249 (EASSKPTNPAWLSSR) are enriched in polar residues.

This sequence belongs to the TIFY/JAZ family. In terms of assembly, homo- and heterodimer. Interacts with COI1, MYC2, MYC3, MYC4, AFPH2/NINJA, TIFY10A/JAZ1, TIFY6B/JAZ3, TIFY11A/JAZ5, TIFY11B/JAZ6, TIFY5A/JAZ8, TIFY7/JAZ9, TIFY9/JAZ10, TIFY3A/JAZ11 and TIFY3B/JAZ12. Interacts with RHD6 and RSL1. As to quaternary structure, (Microbial infection) Interacts with the pathogenic Pseudomonas syringae HopZ1a protein. Post-translationally, (Microbial infection) Acetylated by Pseudomonas syringae HopZ1a. In terms of processing, ubiquitinated. Targeted for degradation by the SCF(COI1) E3 ubiquitin ligase-proteasome pathway during jasmonate signaling. As to expression, expressed in cotyledons, hypocotyls, roots, sepals, petal vascular tissue and stigmas of developing flowers. Expressed in stamen filaments after jasmonic acid treatment.

It is found in the nucleus. Its function is as follows. Repressor of jasmonate responses. Jasmonoyl-isoleucine (JA-Ile) specifically promotes COI1-TIFY10B/JAZ2 interaction. Activated by MYC2, MYC3 and MYC4 transcription factors. Interacts with and suppresses RHD6 and RSL1 transcription factor activities to negatively regulate jasmonate-stimulated root hair development. This Arabidopsis thaliana (Mouse-ear cress) protein is Protein TIFY 10B.